Consider the following 144-residue polypeptide: Large ribosomal subunit protein uL11 (144 aa).

The protein belongs to the universal ribosomal protein uL11 family. As to quaternary structure, part of the ribosomal stalk of the 50S ribosomal subunit. Interacts with L10 and the large rRNA to form the base of the stalk. L10 forms an elongated spine to which L12 dimers bind in a sequential fashion forming a multimeric L10(L12)X complex. One or more lysine residues are methylated.

Its function is as follows. Forms part of the ribosomal stalk which helps the ribosome interact with GTP-bound translation factors. This is Large ribosomal subunit protein uL11 from Granulibacter bethesdensis (strain ATCC BAA-1260 / CGDNIH1).